Here is a 240-residue protein sequence, read N- to C-terminus: Uridylate kinase (240 aa).

12 to 15 (KLSG) provides a ligand contact to ATP. An involved in allosteric activation by GTP region spans residues 20 to 25 (GEKGFG). Gly-54 contacts UMP. ATP-binding residues include Gly-55 and Arg-59. Residues Asp-74 and 135–142 (TGSPYFST) each bind UMP. Residues Asn-163, Tyr-169, and Asp-172 each contribute to the ATP site.

It belongs to the UMP kinase family. As to quaternary structure, homohexamer.

The protein localises to the cytoplasm. The enzyme catalyses UMP + ATP = UDP + ADP. It participates in pyrimidine metabolism; CTP biosynthesis via de novo pathway; UDP from UMP (UMPK route): step 1/1. Its activity is regulated as follows. Allosterically activated by GTP. Inhibited by UTP. Catalyzes the reversible phosphorylation of UMP to UDP. The sequence is that of Uridylate kinase from Limosilactobacillus reuteri (Lactobacillus reuteri).